We begin with the raw amino-acid sequence, 513 residues long: ATP synthase subunit alpha (513 aa).

169-176 lines the ATP pocket; the sequence is GDRQTGKT.

The protein belongs to the ATPase alpha/beta chains family. F-type ATPases have 2 components, CF(1) - the catalytic core - and CF(0) - the membrane proton channel. CF(1) has five subunits: alpha(3), beta(3), gamma(1), delta(1), epsilon(1). CF(0) has three main subunits: a(1), b(2) and c(9-12). The alpha and beta chains form an alternating ring which encloses part of the gamma chain. CF(1) is attached to CF(0) by a central stalk formed by the gamma and epsilon chains, while a peripheral stalk is formed by the delta and b chains.

The protein resides in the cell inner membrane. It carries out the reaction ATP + H2O + 4 H(+)(in) = ADP + phosphate + 5 H(+)(out). Produces ATP from ADP in the presence of a proton gradient across the membrane. The alpha chain is a regulatory subunit. The sequence is that of ATP synthase subunit alpha from Haemophilus influenzae (strain ATCC 51907 / DSM 11121 / KW20 / Rd).